Reading from the N-terminus, the 419-residue chain is MIFIDTAEIIVYGGKGGDGAASFRREKFIEKGGPDGGDGGKGGDVYLVTDPALLTLYDFKYQKEFRAEDGEPGRSQKQFGKDGKDLFIRIPVGVIVADLETQTVVDMDKPGMKLLVARGGRGGKGNARMATATRRAPRFRELGHEGEMRRLRLELKLVAHVGLVGLPNAGKSSLISVISKAKPEIAPYPFTTRSPVLGIVKKAEQSFVVSDVPGLIEGAHEGKGLGLTFLRHVERTKVLAIVIDAAAIDGYEPMQAYETIIGELRAYNPNLLEKPRVLVLNKIDLLQPEHIDQLKVQFADKESHVVLTSAATGEGTNQLVDVLFELISPTLSTEEPTAEFMTMELPPLPEDFSIRREDEYWVVEGRWARYISRYDTTQPWDFQYVQREIRRKKLEEMLRQMGAKEGETVVIHDKAFEIL.

The Obg domain maps to 1-158; it reads MIFIDTAEII…RRLRLELKLV (158 aa). The OBG-type G domain maps to 159 to 328; that stretch reads AHVGLVGLPN…LVDVLFELIS (170 aa). GTP contacts are provided by residues 165-172, 190-194, 211-214, 281-284, and 309-311; these read GLPNAGKS, FTTRS, DVPG, NKID, and SAA. Mg(2+) contacts are provided by Ser172 and Thr192. Positions 344–419 constitute an OCT domain; the sequence is ELPPLPEDFS…VIHDKAFEIL (76 aa).

The protein belongs to the TRAFAC class OBG-HflX-like GTPase superfamily. OBG GTPase family. As to quaternary structure, monomer. Requires Mg(2+) as cofactor.

The protein resides in the cytoplasm. In terms of biological role, an essential GTPase which binds GTP, GDP and possibly (p)ppGpp with moderate affinity, with high nucleotide exchange rates and a fairly low GTP hydrolysis rate. Plays a role in control of the cell cycle, stress response, ribosome biogenesis and in those bacteria that undergo differentiation, in morphogenesis control. This chain is GTPase Obg, found in Coprothermobacter proteolyticus (strain ATCC 35245 / DSM 5265 / OCM 4 / BT).